The following is a 461-amino-acid chain: Argininosuccinate lyase (461 aa).

It belongs to the lyase 1 family. Argininosuccinate lyase subfamily.

The protein resides in the cytoplasm. The enzyme catalyses 2-(N(omega)-L-arginino)succinate = fumarate + L-arginine. The protein operates within amino-acid biosynthesis; L-arginine biosynthesis; L-arginine from L-ornithine and carbamoyl phosphate: step 3/3. The polypeptide is Argininosuccinate lyase (Aeromonas salmonicida (strain A449)).